The sequence spans 61 residues: MPKIIEAVYENGVFKPLQKVDLKEGERVKIKLELKVEPIDLGEPVSVEEIKKIRDGTWMSS.

The protein belongs to the UPF0165 family.

Functionally, possibly the antitoxin component of a type II toxin-antitoxin (TA) system. Its cognate toxin is VapC21 (Potential). This chain is Putative antitoxin VapB21 (vapB21), found in Archaeoglobus fulgidus (strain ATCC 49558 / DSM 4304 / JCM 9628 / NBRC 100126 / VC-16).